The primary structure comprises 608 residues: Threonine--tRNA ligase (608 aa).

Positions 1-145 are editing domain; it reads MKTLLIHAKH…TIKPGRRVRP (145 aa). 2 catalytic regions span residues 192–489 and 193–489; these read PKYL…PSLP and KYLE…PSLP. Residues cysteine 286, histidine 337, and histidine 458 each contribute to the Zn(2+) site.

The protein belongs to the class-II aminoacyl-tRNA synthetase family. Homodimer. It depends on Zn(2+) as a cofactor.

It localises to the cytoplasm. It carries out the reaction tRNA(Thr) + L-threonine + ATP = L-threonyl-tRNA(Thr) + AMP + diphosphate + H(+). In terms of biological role, catalyzes the attachment of threonine to tRNA(Thr) in a two-step reaction: L-threonine is first activated by ATP to form Thr-AMP and then transferred to the acceptor end of tRNA(Thr). Also edits incorrectly charged L-seryl-tRNA(Thr). In Thermofilum pendens (strain DSM 2475 / Hrk 5), this protein is Threonine--tRNA ligase.